A 532-amino-acid chain; its full sequence is Probable rhamnogalacturonase B (532 aa).

The N-terminal stretch at 1–21 (MRINTLSLFSLVSLVPTLALA) is a signal peptide. An intrachain disulfide couples Cys42 to Cys68. Asp219 serves as the catalytic Proton donor. A disulfide bridge connects residues Cys221 and Cys238. N-linked (GlcNAc...) asparagine glycosylation occurs at Asn239. The active site involves His294. Asn321 is a glycosylation site (N-linked (GlcNAc...) asparagine). 2 disulfide bridges follow: Cys344-Cys350 and Cys374-Cys383. 2 stretches are compositionally biased toward low complexity: residues 466–475 (TVAAATSTPA) and 490–499 (QPSQQSPGQS). Positions 466 to 532 (TVAAATSTPA…HRHHQRHGHH (67 aa)) are disordered. Residues 521-532 (AGHRHHQRHGHH) are compositionally biased toward basic residues.

It belongs to the glycosyl hydrolase 28 family.

It localises to the secreted. It catalyses the reaction Endohydrolysis of alpha-D-GalA-(1-&gt;2)-alpha-L-Rha glycosidic bond in the rhamnogalacturonan I backbone with initial inversion of anomeric configuration releasing oligosaccharides with beta-D-GalA at the reducing end.. Pectinolytic enzymes consist of four classes of enzymes: pectine lyase, polygalacturonase, pectin methylesterase and rhamnogalacturonase. Hydrolyzes alpha-D-galacturonopyranosyl-(1,2)-alpha-L-rhamnopyranosyl linkages in the backbone of the hairy regions of pectins. The sequence is that of Probable rhamnogalacturonase B (rhgB) from Aspergillus oryzae (strain ATCC 42149 / RIB 40) (Yellow koji mold).